A 1038-amino-acid polypeptide reads, in one-letter code: TonB-dependent receptor P39 (1038 aa).

The N-terminal stretch at 1–39 (MFKQKLKMKPKIKRNCTFSGLAFILMLLFSSFTVNNLNA) is a signal peptide. A TonB box motif is present at residues 120–127 (DEVVVIGY). One can recognise a TBDR plug domain in the interval 131 to 243 (KRADVIGAVG…ANGVVLITTK (113 aa)). The 790-residue stretch at 249–1038 (FPKMTVDYIS…EIVIGLNVEF (790 aa)) folds into the TBDR beta-barrel domain. The TonB C-terminal box signature appears at 1021 to 1038 (SLRYPNQTEIVIGLNVEF).

Belongs to the TonB-dependent receptor family.

It is found in the cell outer membrane. Functionally, tonB-dependent receptor probably involved in ulvan degradation. Ulvan is the main polysaccharide component of the Ulvales (green seaweed) cell wall. It is composed of disaccharide building blocks comprising 3-sulfated rhamnose (Rha3S) linked to D-glucuronic acid (GlcA), L-iduronic acid (IduA), or D-xylose (Xyl). The TonB-dependent receptor may mediate transport of ulvan oligosaccharides from the surface of the outer membrane to the periplasm for subsequent degradation. In Formosa agariphila (strain DSM 15362 / KCTC 12365 / LMG 23005 / KMM 3901 / M-2Alg 35-1), this protein is TonB-dependent receptor P39.